A 101-amino-acid chain; its full sequence is Small ribosomal subunit protein uS14 (101 aa).

Belongs to the universal ribosomal protein uS14 family. As to quaternary structure, part of the 30S ribosomal subunit. Contacts proteins S3 and S10.

Functionally, binds 16S rRNA, required for the assembly of 30S particles and may also be responsible for determining the conformation of the 16S rRNA at the A site. The sequence is that of Small ribosomal subunit protein uS14 from Cereibacter sphaeroides (strain ATCC 17029 / ATH 2.4.9) (Rhodobacter sphaeroides).